A 382-amino-acid chain; its full sequence is Queuine tRNA-ribosyltransferase (382 aa).

The Proton acceptor role is filled by Asp-89. Residues 89 to 93 (DSGGF), Asp-143, Gln-187, and Gly-214 each bind substrate. The tract at residues 245-251 (GVGKPED) is RNA binding. Asp-264 serves as the catalytic Nucleophile. Positions 269 to 273 (TRNAR) are RNA binding; important for wobble base 34 recognition. Zn(2+) is bound by residues Cys-302, Cys-304, Cys-307, and His-333.

It belongs to the queuine tRNA-ribosyltransferase family. In terms of assembly, homodimer. Within each dimer, one monomer is responsible for RNA recognition and catalysis, while the other monomer binds to the replacement base PreQ1. It depends on Zn(2+) as a cofactor.

It catalyses the reaction 7-aminomethyl-7-carbaguanine + guanosine(34) in tRNA = 7-aminomethyl-7-carbaguanosine(34) in tRNA + guanine. It functions in the pathway tRNA modification; tRNA-queuosine biosynthesis. In terms of biological role, catalyzes the base-exchange of a guanine (G) residue with the queuine precursor 7-aminomethyl-7-deazaguanine (PreQ1) at position 34 (anticodon wobble position) in tRNAs with GU(N) anticodons (tRNA-Asp, -Asn, -His and -Tyr). Catalysis occurs through a double-displacement mechanism. The nucleophile active site attacks the C1' of nucleotide 34 to detach the guanine base from the RNA, forming a covalent enzyme-RNA intermediate. The proton acceptor active site deprotonates the incoming PreQ1, allowing a nucleophilic attack on the C1' of the ribose to form the product. After dissociation, two additional enzymatic reactions on the tRNA convert PreQ1 to queuine (Q), resulting in the hypermodified nucleoside queuosine (7-(((4,5-cis-dihydroxy-2-cyclopenten-1-yl)amino)methyl)-7-deazaguanosine). The polypeptide is Queuine tRNA-ribosyltransferase (Sodalis glossinidius (strain morsitans)).